We begin with the raw amino-acid sequence, 546 residues long: Oncoprotein-induced transcript 3 protein (546 aa).

The signal sequence occupies residues Met-1–Leu-16. N-linked (GlcNAc...) asparagine glycosylation is found at Asn-89 and Asn-116. The region spanning Asp-182 to Glu-222 is the EGF-like; calcium-binding domain. 3 disulfides stabilise this stretch: Cys-186-Cys-197, Cys-193-Cys-206, and Cys-208-Cys-221. Residues Thr-261 to Arg-516 form the ZP domain. N-linked (GlcNAc...) asparagine glycosylation is present at Asn-299. Residues Asp-524 to Glu-546 are disordered.

It is found in the nucleus envelope. May be involved in hepatocellular function and development. The chain is Oncoprotein-induced transcript 3 protein (Oit3) from Rattus norvegicus (Rat).